The primary structure comprises 506 residues: Subtilisin-like serine protease Cur l 4.0101 (506 aa).

A signal peptide spans 1 to 15 (MKYSLIAALPALAAA). A propeptide spans 16 to 135 (SPTFSTETIH…IERDSEVRIL (120 aa)) (removed in mature form). Residues 43–134 (SYMVVFKKHV…YIERDSEVRI (92 aa)) form the Inhibitor I9 domain. Residues 59–79 (HDWVQSVHSKNTQERMELRKR) are disordered. The segment covering 69 to 79 (NTQERMELRKR) has biased composition (basic and acidic residues). The 307-residue stretch at 147–453 (PWGLARISHR…GGSSNYTDII (307 aa)) folds into the Peptidase S8 domain. Active-site charge relay system residues include Asp-183 and His-215. N-linked (GlcNAc...) asparagine glycosylation is found at Asn-245 and Asn-285. Ser-381 functions as the Charge relay system in the catalytic mechanism. N-linked (GlcNAc...) asparagine glycosylation occurs at Asn-448. A propeptide spans 459 to 506 (TVKKAASKEEEKESEFRITIPSLSELEDDFEKAKESAGRKAHHVGGKL) (removed in mature form).

The protein belongs to the peptidase S8 family.

Functionally, serine protease. The polypeptide is Subtilisin-like serine protease Cur l 4.0101 (Cochliobolus lunatus (Filamentous fungus)).